Consider the following 26-residue polypeptide: ATP synthase subunit gamma, mitochondrial (26 aa).

It belongs to the ATPase gamma chain family. As to quaternary structure, F-type ATPases have 2 components, CF(1) - the catalytic core - and CF(0) - the membrane proton channel. CF(1) has five subunits: alpha(3), beta(3), gamma(1), delta(1), epsilon(1). CF(0) has three main subunits: a, b and c.

It localises to the mitochondrion. The protein resides in the mitochondrion inner membrane. Its function is as follows. Mitochondrial membrane ATP synthase (F(1)F(0) ATP synthase or Complex V) produces ATP from ADP in the presence of a proton gradient across the membrane which is generated by electron transport complexes of the respiratory chain. F-type ATPases consist of two structural domains, F(1) - containing the extramembraneous catalytic core, and F(0) - containing the membrane proton channel, linked together by a central stalk and a peripheral stalk. During catalysis, ATP synthesis in the catalytic domain of F(1) is coupled via a rotary mechanism of the central stalk subunits to proton translocation. Part of the complex F(1) domain and the central stalk which is part of the complex rotary element. The gamma subunit protrudes into the catalytic domain formed of alpha(3)beta(3). Rotation of the central stalk against the surrounding alpha(3)beta(3) subunits leads to hydrolysis of ATP in three separate catalytic sites on the beta subunits. The chain is ATP synthase subunit gamma, mitochondrial (ATPC) from Spinacia oleracea (Spinach).